Consider the following 486-residue polypeptide: Hematopoietic lineage cell-specific protein (486 aa).

Residues 27 to 66 are involved in HAX-1 binding; it reads FVNDISEKEQRWGAKTIEGSGRTEHINIHQLRNKVSEEHD. Residue lysine 41 is modified to N6-acetyllysine. Cortactin repeat units lie at residues 79 to 115, 116 to 152, and 153 to 189; these read ASHGYGGRFGVERDRMDKSAVGHEYVADVEKHSSQTD, AARGFGGKYGVERDRADKSAVGFDYKGEVEKHASQKD, and YSHGFGGRYGVEKDKRDKAALGYDYKGETEKHESQRD. Lysine 123 bears the N6-acetyllysine mark. Tyrosine 140 is modified (phosphotyrosine). The Cortactin 4; truncated repeat unit spans residues 190-212; sequence YAKGFGGQYGIQKDRVDKSAVGF. Position 192 is an N6-acetyllysine (lysine 192). Tyrosine 198 is subject to Phosphotyrosine. A Phosphotyrosine; by FGR modification is found at tyrosine 222. Residues 226-430 form a disordered region; that stretch reads TPIEAASSGA…AGPSAGAGGA (205 aa). Basic and acidic residues-rich tracts occupy residues 240-258 and 265-276; these read AKFESLAEEKRKREEEEKA and QQERKAVVKMSR. Lysine 241 is subject to N6-acetyllysine. Serine 275 carries the phosphoserine modification. The residue at position 330 (threonine 330) is a Phosphothreonine. Position 333 is a phosphoserine (serine 333). Residues 358–367 show a composition bias toward low complexity; it reads VVEEPVYEAA. The segment covering 368–413 has biased composition (acidic residues); sequence PELEPEPEPDYEPEPETEPDYEDVGELDRQDEDAEGDYEDVLEPED. Phosphotyrosine; by SYK and FES occurs at positions 388 and 405. The SH3 domain occupies 429–486; it reads GAGISAIALYDYQGEGSDELSFDPDDIITDIEMVDEGWWRGQCRGHFGLFPANYVKLL.

In terms of assembly, interacts (via SH2 domain) with FGR. Associates with the SH2 and SH3 domains of LCK. Binding to he LCK SH3 domain occurs constitutively, while binding to the LCK SH2 domain occurs only upon TCR stimulation. A similar binding pattern was observed with LYN, but not with FYN in which the FYN SH2 region associates upon TCR stimulation but the FYN SH3 region does not associate regardless of TCR stimulation. Directly associates with HAX1, through binding to its C-terminal region. Interacts with HS1BP3. Interacts with FES/FPS. Forms a multiprotein complex with LYN and ANKRD54. Post-translationally, phosphorylated by LYN, FYN and FGR after cross-linking of surface IgM on B-cells. Phosphorylation by LYN, FYN and FGR requires prior phosphorylation by SYK. Binds to LCK in vivo, and is tyrosine phosphorylated upon TCR stimulation. Phosphorylated by FES. In terms of tissue distribution, expressed only in tissues and cells of hematopoietic origin.

The protein localises to the mitochondrion. Its function is as follows. Substrate of the antigen receptor-coupled tyrosine kinase. Plays a role in antigen receptor signaling for both clonal expansion and deletion in lymphoid cells. May also be involved in the regulation of gene expression. The polypeptide is Hematopoietic lineage cell-specific protein (Hcls1) (Mus musculus (Mouse)).